The primary structure comprises 175 residues: EKC/KEOPS complex subunit TPRKB (175 aa).

This sequence belongs to the CGI121/TPRKB family. Component of the EKC/KEOPS complex.

It localises to the cytoplasm. It is found in the cytosol. The protein localises to the nucleus. In terms of biological role, component of the EKC/KEOPS complex that is required for the formation of a threonylcarbamoyl group on adenosine at position 37 (t(6)A37) in tRNAs that read codons beginning with adenine. The complex is probably involved in the transfer of the threonylcarbamoyl moiety of threonylcarbamoyl-AMP (TC-AMP) to the N6 group of A37. Tprkb acts as an allosteric effector that regulates the t(6)A activity of the complex. The protein is EKC/KEOPS complex subunit TPRKB of Danio rerio (Zebrafish).